The chain runs to 119 residues: Large ribosomal subunit protein uL18 (119 aa).

It belongs to the universal ribosomal protein uL18 family. In terms of assembly, part of the 50S ribosomal subunit; part of the 5S rRNA/L5/L18/L25 subcomplex. Contacts the 5S and 23S rRNAs.

Its function is as follows. This is one of the proteins that bind and probably mediate the attachment of the 5S RNA into the large ribosomal subunit, where it forms part of the central protuberance. This Micrococcus luteus (Micrococcus lysodeikticus) protein is Large ribosomal subunit protein uL18.